A 362-amino-acid polypeptide reads, in one-letter code: S-adenosylmethionine:tRNA ribosyltransferase-isomerase (362 aa).

It belongs to the QueA family. In terms of assembly, monomer.

Its subcellular location is the cytoplasm. It carries out the reaction 7-aminomethyl-7-carbaguanosine(34) in tRNA + S-adenosyl-L-methionine = epoxyqueuosine(34) in tRNA + adenine + L-methionine + 2 H(+). It participates in tRNA modification; tRNA-queuosine biosynthesis. Transfers and isomerizes the ribose moiety from AdoMet to the 7-aminomethyl group of 7-deazaguanine (preQ1-tRNA) to give epoxyqueuosine (oQ-tRNA). This chain is S-adenosylmethionine:tRNA ribosyltransferase-isomerase, found in Methylobacterium sp. (strain 4-46).